The following is a 621-amino-acid chain: EEIVPGPKSRYRIKVEGKKHTLIIEGATKADSAEYSVMTTGGQSSAKLSVDLRPLKITTPLTDQTVKLGKEVCLKCEISENVPGKWTKNGLPVQEGERLKVVHKGRIHKLVIANALIEDEGEYVFTPDAITVPLVCQIHVIDPPKIILDGLEADNTVTVIAGSKLRLEIPVTGEPPPKAIWSRADKAIMEGSGRIRAESYPDSSTLVIDVAERDDSGVYNINLKNEAGEAHASIKLRLWISLILRLAPNVTEVGDDWCIMNWEPPVYDGGSPILGYFIERKKKQSSRWMRLNFDLCKETTFEPKKMIEGVAYEVRIFAVNAIGISKPSMPSKPFVPLAVTSPPTLLAVDSVTDSSVTMKWRPPDQIGAAGLSGYVLEYCFEGSTSAKQSNENGEAANDLPAEDWSLQTQTGSTRPKFTITGLPTDAKIFVRVKAINAAGASETKYYSQPILVKEIIEPPKIRIPRHLKQTYIRRVGEAVNLVIPFQGKPRPELTWKKDGAEIDKNQINIRNSETDTIIFIRKAERSHSGKYDLEVKVDKYVENASIDIQIVDRPGPPQAVTIEDVWGENVALTWTPPKDDGNAAITGYTIQKADKKSMEWFAVIEHYHRTNATITELVIGN.

3 Ig-like C2-type domains span residues 1-53, 54-142, and 144-241; these read EEIV…VDLR, PLKI…HVID, and PKII…LWIS. Residue threonine 28 is modified to Phosphothreonine. Serine 233 is subject to Phosphoserine. 3 Fibronectin type-III domains span residues 244–343, 344–459, and 556–621; these read LRLA…TSPP, TLLA…IEPP, and PPQA…VIGN. Threonine 420 is subject to Phosphothreonine. Tyrosine 445 carries the phosphotyrosine modification. An Ig-like C2-type 4 domain is found at 459 to 553; that stretch reads PKIRIPRHLK…ASIDIQIVDR (95 aa).

This sequence belongs to the immunoglobulin superfamily. MyBP family. As to quaternary structure, interacts with USP25 (isoform USP25m only); the interaction prevents proteasomal degradation of MYBPC1.

Thick filament-associated protein located in the crossbridge region of vertebrate striated muscle a bands. Slow skeletal protein that binds to both myosin and actin. In vitro, binds to native thin filaments and modifies the activity of actin-activated myosin ATPase. May modulate muscle contraction or may play a more structural role. This Rattus norvegicus (Rat) protein is Myosin-binding protein C, slow-type (Mybpc1).